Here is a 412-residue protein sequence, read N- to C-terminus: Serine/threonine transporter SstT (412 aa).

10 helical membrane-spanning segments follow: residues 16–36 (LVAQ…FLPG), 44–64 (LGDL…FVLV), 82–102 (IIVL…LASF), 115–135 (TDVI…FNIV), 141–161 (ALLN…GFAF), 179–199 (VTLI…GLVA), 217–237 (LLVL…LIVF), 298–318 (MGGA…TLGI), 330–350 (LLAA…LLLI), and 357–377 (FGIS…IGVV).

The protein belongs to the dicarboxylate/amino acid:cation symporter (DAACS) (TC 2.A.23) family.

Its subcellular location is the cell inner membrane. It carries out the reaction L-serine(in) + Na(+)(in) = L-serine(out) + Na(+)(out). The enzyme catalyses L-threonine(in) + Na(+)(in) = L-threonine(out) + Na(+)(out). Its function is as follows. Involved in the import of serine and threonine into the cell, with the concomitant import of sodium (symport system). This chain is Serine/threonine transporter SstT, found in Stutzerimonas stutzeri (strain A1501) (Pseudomonas stutzeri).